The primary structure comprises 306 residues: Glutaminase (306 aa).

Substrate-binding residues include serine 64, asparagine 115, glutamate 159, asparagine 166, tyrosine 190, tyrosine 242, and valine 260.

Belongs to the glutaminase family. In terms of assembly, homotetramer.

It catalyses the reaction L-glutamine + H2O = L-glutamate + NH4(+). The protein is Glutaminase of Aliivibrio salmonicida (strain LFI1238) (Vibrio salmonicida (strain LFI1238)).